Consider the following 469-residue polypeptide: Citrate synthase, mitochondrial (469 aa).

The transit peptide at 1 to 33 (MAPVMRLGSAALRSSIHLTSRQTAFTAARCYSS) directs the protein to the mitochondrion. Residue H352 is part of the active site.

The protein belongs to the citrate synthase family.

The protein localises to the mitochondrion matrix. The catalysed reaction is oxaloacetate + acetyl-CoA + H2O = citrate + CoA + H(+). It functions in the pathway carbohydrate metabolism; tricarboxylic acid cycle; isocitrate from oxaloacetate: step 1/2. The protein is Citrate synthase, mitochondrial (cit-1) of Neurospora crassa (strain ATCC 24698 / 74-OR23-1A / CBS 708.71 / DSM 1257 / FGSC 987).